A 589-amino-acid polypeptide reads, in one-letter code: Serine/threonine-protein kinase shk2 (589 aa).

The PH domain maps to 23–125; that stretch reads GIIRSGWVML…WMDLISSRAL (103 aa). One can recognise a CRIB domain in the interval 129-142; that stretch reads VSSPMNPKHQVHVG. One can recognise a Protein kinase domain in the interval 309 to 566; the sequence is FNVKHKLGQG…AAELLTHSFL (258 aa). ATP is bound by residues 315-323 and lysine 343; that span reads LGQGASGSV. The active-site Proton acceptor is the aspartate 434.

It belongs to the protein kinase superfamily. STE Ser/Thr protein kinase family. STE20 subfamily.

The catalysed reaction is L-seryl-[protein] + ATP = O-phospho-L-seryl-[protein] + ADP + H(+). It catalyses the reaction L-threonyl-[protein] + ATP = O-phospho-L-threonyl-[protein] + ADP + H(+). In terms of biological role, forms an activated complex with GTP-bound Ras-like cdc42. Participates in Ras-dependent morphological control and mating response pathways. The polypeptide is Serine/threonine-protein kinase shk2 (shk2) (Schizosaccharomyces pombe (strain 972 / ATCC 24843) (Fission yeast)).